Reading from the N-terminus, the 407-residue chain is Putative glucose/galactose transporter (407 aa).

12 helical membrane passes run 11-31 (GSLTALFFLMGFITVLNDILI), 47-67 (LIQFCFFGAYFIMGGVFGNVI), 70-90 (IGYPFGVVLGFVITATGCALF), 96-116 (FGSYGFFLGALFILASGIVCL), 139-159 (VQAFNSLGTTLGPIFGSLLIF), 180-200 (VQMPYLGLAVFSLLLALIMYL), 225-245 (FVFGALGIFFYVGGEVAIGSF), 263-283 (HYLVYYWGGAMVGRFLGSVLM), 300-320 (IVLIALAIIIGGKIALFALTF), 321-341 (VGFFNSIMFPTIFSLATLNLG), 349-369 (GVISMAIVGGALIPPIQGAVT), and 378-398 (NLLYAYGVPLLCYFYILFFAL).

Belongs to the major facilitator superfamily. FHS transporter (TC 2.A.1.7) family.

The protein localises to the cell inner membrane. Intake of glucose and galactose. This Helicobacter pylori (strain ATCC 700392 / 26695) (Campylobacter pylori) protein is Putative glucose/galactose transporter (gluP).